A 187-amino-acid chain; its full sequence is 3'-5' DNA exonuclease Cap18 (187 aa).

One can recognise an Exonuclease domain in the interval Val9–Phe173. Mg(2+) is bound by residues Asp12, Met25, His160, and Asp165. His160 (proton donor/acceptor) is an active-site residue.

It belongs to the Cap18 exonuclease family. In terms of assembly, homodimer.

Effector component of a CBASS antivirus system. CBASS (cyclic oligonucleotide-based antiphage signaling system) provides immunity against bacteriophage. The CD-NTase protein synthesizes cyclic nucleotides in response to infection; these serve as specific second messenger signals. The signals activate a diverse range of effectors, leading to bacterial cell death and thus abortive phage infection. A type III CBASS system. A sequence non-specific 3'-5' DNA exonuclease that preferentially degrades ssDNA with 3' overhangs or a mismatch at the 3' end. Expression of this CBASS system (Cap17-CapW-CdnC-Cap7-Cap6-Cap18-Cap19) in a susceptible E.coli (strain JP313) confers resistance to bacteriophage lambda cI--. The chain is 3'-5' DNA exonuclease Cap18 from Escherichia coli.